A 284-amino-acid polypeptide reads, in one-letter code: Efem/EfeO family lipoprotein (284 aa).

Positions 1–17 are cleaved as a signal peptide; it reads MKKLTTLLLASTLLIAA. A lipid anchor (N-palmitoyl cysteine) is attached at cysteine 18. Cysteine 18 is lipidated: S-diacylglycerol cysteine.

Belongs to the EfeM/EfeO family.

It is found in the cell membrane. The sequence is that of Efem/EfeO family lipoprotein from Staphylococcus aureus (strain NCTC 8325 / PS 47).